We begin with the raw amino-acid sequence, 214 residues long: Small ribosomal subunit protein eS6 (214 aa).

The protein belongs to the eukaryotic ribosomal protein eS6 family.

This chain is Small ribosomal subunit protein eS6 (rps6e), found in Saccharolobus islandicus (strain Y.G.57.14 / Yellowstone #1) (Sulfolobus islandicus).